A 92-amino-acid polypeptide reads, in one-letter code: Small ribosomal subunit protein bS20 (92 aa).

Positions 1-25 are disordered; the sequence is MANSAQARKRARQAAKANSHNSALR.

It belongs to the bacterial ribosomal protein bS20 family.

Functionally, binds directly to 16S ribosomal RNA. This is Small ribosomal subunit protein bS20 from Paraburkholderia phytofirmans (strain DSM 17436 / LMG 22146 / PsJN) (Burkholderia phytofirmans).